The primary structure comprises 117 residues: Large ribosomal subunit protein bL19 (117 aa).

It belongs to the bacterial ribosomal protein bL19 family.

Its function is as follows. This protein is located at the 30S-50S ribosomal subunit interface and may play a role in the structure and function of the aminoacyl-tRNA binding site. The chain is Large ribosomal subunit protein bL19 from Rhodopirellula baltica (strain DSM 10527 / NCIMB 13988 / SH1).